A 714-amino-acid chain; its full sequence is Polyribonucleotide nucleotidyltransferase (714 aa).

Asp488 and Asp494 together coordinate Mg(2+). Residues 555-614 (PRIEVMNIPTDKIRDVIGSGGKVIREIVEKTGAKINIEDDGTVKIASSNGKEIEAAKKWI) form the KH domain. The S1 motif domain maps to 624-692 (GEIYEGTVVK…ERGKVRLSMK (69 aa)).

The protein belongs to the polyribonucleotide nucleotidyltransferase family. Requires Mg(2+) as cofactor.

It localises to the cytoplasm. The catalysed reaction is RNA(n+1) + phosphate = RNA(n) + a ribonucleoside 5'-diphosphate. Functionally, involved in mRNA degradation. Catalyzes the phosphorolysis of single-stranded polyribonucleotides processively in the 3'- to 5'-direction. This is Polyribonucleotide nucleotidyltransferase from Brucella ovis (strain ATCC 25840 / 63/290 / NCTC 10512).